The sequence spans 324 residues: MFNFANFYKLIAQDTILQPWLNTLPQQLTDWQNAEHGDIERWLKALKKIPEGCAENIDLKTSVTLSNNSPLIDGERKKLESLLRTFHPWRKGPFTVHDIHIDTEWRSDWKWDRVLPHLSPLKNRSILDVGCGNGYHMLRMLGEGARLCVGIDPSHLFLVQFEAIRKLMGNDQRAHLLPLGIEQLPELNAFDTVFSMGVLYHRRSPLDHLILLKNQLVAGGELVLETLVIDGDENAVLMPVDRYAQMRNVYFFPSAKALKVWLESVGFIDVKIVDECVTTTGEQRSTEWMKHNSLPEYLDPTDSSKTIEGHPAPKRAILIARKPD.

Residues Lys-91, Trp-105, Lys-110, Gly-130, 152-154 (DPS), 181-182 (IE), Met-196, Tyr-200, and Arg-315 contribute to the carboxy-S-adenosyl-L-methionine site.

This sequence belongs to the class I-like SAM-binding methyltransferase superfamily. CmoB family. In terms of assembly, homotetramer.

It catalyses the reaction carboxy-S-adenosyl-L-methionine + 5-hydroxyuridine(34) in tRNA = 5-carboxymethoxyuridine(34) in tRNA + S-adenosyl-L-homocysteine + H(+). Catalyzes carboxymethyl transfer from carboxy-S-adenosyl-L-methionine (Cx-SAM) to 5-hydroxyuridine (ho5U) to form 5-carboxymethoxyuridine (cmo5U) at position 34 in tRNAs. The sequence is that of tRNA U34 carboxymethyltransferase from Aliivibrio salmonicida (strain LFI1238) (Vibrio salmonicida (strain LFI1238)).